Reading from the N-terminus, the 424-residue chain is Carbohydrate sulfotransferase 8 (424 aa).

At 1 to 10 the chain is on the cytoplasmic side; sequence MTLRPGTMRL. The helical; Signal-anchor for type II membrane protein transmembrane segment at 11 to 31 threads the bilayer; sequence ACMFSSILLFGAAGLLLFISL. At 32–424 the chain is on the lumenal side; sequence QDPTELAPQQ…NYSKPFADLY (393 aa). The interval 47–107 is disordered; the sequence is FNIRPRQPHH…PLQRGTRLRL (61 aa). Over residues 66-77 the composition is skewed to basic and acidic residues; that stretch reads GDLKEPTERVTR. N128 is a glycosylation site (N-linked (GlcNAc...) asparagine). 3'-phosphoadenylyl sulfate is bound by residues 198–204 and 258–266; these read PKAGCSN and REPFERLVS. Residues N294, N367, and N415 are each glycosylated (N-linked (GlcNAc...) asparagine).

It belongs to the sulfotransferase 2 family. As to expression, predominantly expressed in pituitary gland. In brain, it is expressed in pituitary gland, cerebellum, medulla oblongata, pons, thalamus and spinal cord. Expressed in the epidermis. Expressed at lower level in lung, spleen, adrenal gland, placenta, prostate, testis, mammary gland and trachea.

The protein localises to the golgi apparatus membrane. Its function is as follows. Catalyzes the transfer of sulfate to position 4 of non-reducing N-acetylgalactosamine (GalNAc) residues in both N-glycans and O-glycans. Required for biosynthesis of glycoprotein hormones lutropin and thyrotropin, by mediating sulfation of their carbohydrate structures. Only active against terminal GalNAcbeta1,GalNAcbeta. Not active toward chondroitin. The chain is Carbohydrate sulfotransferase 8 (CHST8) from Homo sapiens (Human).